The chain runs to 48 residues: MSAKMEILLFANLAHKSMFGMEPVTFASIGVTVGVQIVILLIWGLSWR.

A helical transmembrane segment spans residues 25 to 47; the sequence is TFASIGVTVGVQIVILLIWGLSW.

The protein localises to the membrane. This is an uncharacterized protein from Archaeoglobus fulgidus (strain ATCC 49558 / DSM 4304 / JCM 9628 / NBRC 100126 / VC-16).